We begin with the raw amino-acid sequence, 126 residues long: UPF0538 protein C2orf76 (126 aa).

Belongs to the UPF0538 family.

The polypeptide is UPF0538 protein C2orf76 (C2orf76) (Homo sapiens (Human)).